A 126-amino-acid polypeptide reads, in one-letter code: Holo-[acyl-carrier-protein] synthase (126 aa).

Mg(2+)-binding residues include D9 and E58.

The protein belongs to the P-Pant transferase superfamily. AcpS family. Requires Mg(2+) as cofactor.

It localises to the cytoplasm. It carries out the reaction apo-[ACP] + CoA = holo-[ACP] + adenosine 3',5'-bisphosphate + H(+). Its function is as follows. Transfers the 4'-phosphopantetheine moiety from coenzyme A to a Ser of acyl-carrier-protein. This Cronobacter sakazakii (strain ATCC BAA-894) (Enterobacter sakazakii) protein is Holo-[acyl-carrier-protein] synthase.